Here is a 497-residue protein sequence, read N- to C-terminus: MEKWWFNSMLSNEELEHRCGLSKSMDSLGAIGNSSGSEDPVINDTDKNIHSWSDIDSSSYSNVDHLFGVRNIRNFISDDTFLVRDRTGDSYSIYLDIENEIFEIDNDRSFLSELESYFSSYLNNRSKSDTHYYDRYMYDTKYTWNNHINSCIDSYIRSEISIDSYISSGSDNYDNYSDSYISSYICSESVINSSDSGSYSIRTSTSTNGSDFNIRGRYNDLDINKKYRHLWIQCENCYGLNYKKFFRSKMNICEQCGYHLKMSSSDRIELSIDPGTWDPMDEDMVSIDPIEFHSEEEPYKDRIDSYQRKTGLTEAVQTGIGQLNGIPIAIGVMDFQFMGGSMGSVVGEKITRLIEYATNGSLPLIIVCASGGARMQEGSLSLMQMAKISSASYDYQSNKKLFYVSILTSPTTGGVTASFGMLGDIIIAEPNAYIAFAGKRVIEQTLNKTVPEGSQAAEYSFHKGLFDSIVPRNLLKGVLSELFQLHGFFPLNQNSIK.

One can recognise a CoA carboxyltransferase N-terminal domain in the interval 230-497; that stretch reads LWIQCENCYG…FFPLNQNSIK (268 aa). Zn(2+) contacts are provided by Cys234, Cys237, Cys253, and Cys256. The segment at 234-256 adopts a C4-type zinc-finger fold; it reads CENCYGLNYKKFFRSKMNICEQC.

It belongs to the AccD/PCCB family. In terms of assembly, acetyl-CoA carboxylase is a heterohexamer composed of biotin carboxyl carrier protein, biotin carboxylase and 2 subunits each of ACCase subunit alpha and ACCase plastid-coded subunit beta (accD). Zn(2+) serves as cofactor.

It is found in the plastid. The protein resides in the chloroplast stroma. It carries out the reaction N(6)-carboxybiotinyl-L-lysyl-[protein] + acetyl-CoA = N(6)-biotinyl-L-lysyl-[protein] + malonyl-CoA. It participates in lipid metabolism; malonyl-CoA biosynthesis; malonyl-CoA from acetyl-CoA: step 1/1. In terms of biological role, component of the acetyl coenzyme A carboxylase (ACC) complex. Biotin carboxylase (BC) catalyzes the carboxylation of biotin on its carrier protein (BCCP) and then the CO(2) group is transferred by the transcarboxylase to acetyl-CoA to form malonyl-CoA. This Platanus occidentalis (Sycamore) protein is Acetyl-coenzyme A carboxylase carboxyl transferase subunit beta, chloroplastic.